A 468-amino-acid polypeptide reads, in one-letter code: Probable Xaa-Pro aminopeptidase PEPP (468 aa).

Mn(2+) contacts are provided by Asp264, Asp275, Glu398, and Glu438.

This sequence belongs to the peptidase M24B family. Mn(2+) is required as a cofactor.

The catalysed reaction is Release of any N-terminal amino acid, including proline, that is linked to proline, even from a dipeptide or tripeptide.. Its function is as follows. Catalyzes the removal of a penultimate prolyl residue from the N-termini of peptides. This chain is Probable Xaa-Pro aminopeptidase PEPP (PEPP), found in Paracoccidioides lutzii (strain ATCC MYA-826 / Pb01) (Paracoccidioides brasiliensis).